We begin with the raw amino-acid sequence, 258 residues long: Imidazole glycerol phosphate synthase subunit HisF (258 aa).

Residues Asp-11 and Asp-130 contribute to the active site.

The protein belongs to the HisA/HisF family. Heterodimer of HisH and HisF.

Its subcellular location is the cytoplasm. It catalyses the reaction 5-[(5-phospho-1-deoxy-D-ribulos-1-ylimino)methylamino]-1-(5-phospho-beta-D-ribosyl)imidazole-4-carboxamide + L-glutamine = D-erythro-1-(imidazol-4-yl)glycerol 3-phosphate + 5-amino-1-(5-phospho-beta-D-ribosyl)imidazole-4-carboxamide + L-glutamate + H(+). It participates in amino-acid biosynthesis; L-histidine biosynthesis; L-histidine from 5-phospho-alpha-D-ribose 1-diphosphate: step 5/9. IGPS catalyzes the conversion of PRFAR and glutamine to IGP, AICAR and glutamate. The HisF subunit catalyzes the cyclization activity that produces IGP and AICAR from PRFAR using the ammonia provided by the HisH subunit. The chain is Imidazole glycerol phosphate synthase subunit HisF from Xanthomonas axonopodis pv. citri (strain 306).